Here is a 796-residue protein sequence, read N- to C-terminus: Striatin-3 (796 aa).

Met-1 is subject to N-acetylmethionine. A compositionally biased stretch (gly residues) spans 1–13 (MDELAGGGGGGQG). Residues 1 to 60 (MDELAGGGGGGQGMAAPPRPQQGPGGNLSLPPGANGAPGGGGPPAAEAAGPPAGPELSRP) are disordered. Residues 71–79 (YIQHEWARF) form a caveolin-binding region. A coiled-coil region spans residues 77-136 (ARFEMERAHWEVERAELQARIAFLQGERKGQENLKKDLVRRIKMLEYALKQERAKYHKLK). At Thr-150 the chain carries Phosphothreonine. The interval 166 to 183 (QNSQLTWKQGRQLLRQYL) is calmodulin-binding. Residues Ser-202, Ser-214, Ser-229, Ser-257, and Ser-334 each carry the phosphoserine modification. 2 disordered regions span residues 252 to 271 (ENAD…IPEG) and 311 to 335 (EDGE…DLSP). The segment covering 253–264 (NADDSDEEENDM) has biased composition (acidic residues). WD repeat units lie at residues 477-516 (SHFD…PAKK), 530-569 (AHIG…VDPY), 583-622 (AHTD…PCVC), 678-717 (QSSN…MIHS), 720-759 (AHLD…CVQE), and 766-795 (KLDE…AKVF).

This sequence belongs to the WD repeat striatin family. In terms of assembly, tetramerizes. Part of the core of STRIPAK complexes composed of PP2A catalytic and scaffolding subunits, the striatins (PP2A regulatory subunits), the striatin-associated proteins MOB4, STRIP1 and STRIP2, PDCD10 and members of the STE20 kinases, such as STK24 and STK26. The STRIPAK complex can be extended by adapter proteins such as SLMAP:SIKE1 or CTTNBP2NL. Interacts with CDC42BPB. As to expression, mainly expressed in the brain and muscles but is also detected at low levels in various tissues such as kidney, spleen and lung.

It localises to the cytoplasm. It is found in the membrane. In terms of biological role, calmodulin-binding scaffolding protein which is the center of the striatin-interacting phosphatase and kinase (STRIPAK) complexes. STRIPAK complexes have critical roles in protein (de)phosphorylation and are regulators of multiple signaling pathways including Hippo, MAPK, nuclear receptor and cytoskeleton remodeling. Different types of STRIPAK complexes are involved in a variety of biological processes such as cell growth, differentiation, apoptosis, metabolism and immune regulation. The chain is Striatin-3 (Strn3) from Mus musculus (Mouse).